A 186-amino-acid chain; its full sequence is Elongation factor P (186 aa).

It belongs to the elongation factor P family.

The protein localises to the cytoplasm. The protein operates within protein biosynthesis; polypeptide chain elongation. Its function is as follows. Involved in peptide bond synthesis. Stimulates efficient translation and peptide-bond synthesis on native or reconstituted 70S ribosomes in vitro. Probably functions indirectly by altering the affinity of the ribosome for aminoacyl-tRNA, thus increasing their reactivity as acceptors for peptidyl transferase. This Polynucleobacter necessarius subsp. necessarius (strain STIR1) protein is Elongation factor P.